We begin with the raw amino-acid sequence, 599 residues long: 1-deoxy-D-xylulose-5-phosphate synthase (599 aa).

Thiamine diphosphate is bound by residues histidine 63 and 104-106 (GHS). Residue aspartate 135 participates in Mg(2+) binding. Residues 136 to 137 (GA), asparagine 164, tyrosine 271, and glutamate 352 contribute to the thiamine diphosphate site. Asparagine 164 provides a ligand contact to Mg(2+).

Belongs to the transketolase family. DXPS subfamily. As to quaternary structure, homodimer. Requires Mg(2+) as cofactor. It depends on thiamine diphosphate as a cofactor.

The enzyme catalyses D-glyceraldehyde 3-phosphate + pyruvate + H(+) = 1-deoxy-D-xylulose 5-phosphate + CO2. Its pathway is metabolic intermediate biosynthesis; 1-deoxy-D-xylulose 5-phosphate biosynthesis; 1-deoxy-D-xylulose 5-phosphate from D-glyceraldehyde 3-phosphate and pyruvate: step 1/1. Functionally, catalyzes the acyloin condensation reaction between C atoms 2 and 3 of pyruvate and glyceraldehyde 3-phosphate to yield 1-deoxy-D-xylulose-5-phosphate (DXP). This Nitratiruptor sp. (strain SB155-2) protein is 1-deoxy-D-xylulose-5-phosphate synthase.